The sequence spans 294 residues: Glucosamine kinase GspK (294 aa).

Threonine 12 lines the ATP pocket. Aspartate 101 provides a ligand contact to substrate. Position 122 (threonine 122) interacts with ATP. Substrate contacts are provided by residues 139 to 141 (GRE) and aspartate 146. Glycine 202 lines the ATP pocket.

Belongs to the eukaryotic-type N-acetylglucosamine kinase family.

The protein localises to the cytoplasm. The catalysed reaction is D-glucosamine + ATP = D-glucosamine 6-phosphate + ADP + H(+). In terms of biological role, ATP-dependent kinase, which is specific for glucosamine. Does not show kinase activity with any other sugar. In Vibrio cholerae serotype O1 (strain ATCC 39315 / El Tor Inaba N16961), this protein is Glucosamine kinase GspK (gspK).